Here is a 294-residue protein sequence, read N- to C-terminus: RAB7A-interacting MON1-CCZ1 complex subunit 1 (294 aa).

Ala-2 is subject to N-acetylalanine.

This sequence belongs to the RIMOC1 family. Interacts with the MON1A-CCZ1B complex. Interacts with GDP-bound RAB7A and promotes its interaction with the MON1A-CCZ1B complex.

The protein resides in the cytoplasm. Its subcellular location is the cytosol. Its function is as follows. Plays an important role in the removal of damaged mitochondria via mitophagy by controlling the stability and localization of RAB7A. Required for the recruitment of RAB7A and ATG9A vesicles to damaged mitochondria and promotes the stability of RAB7A by inhibiting its proteasomal degradation during mitophagy. This chain is RAB7A-interacting MON1-CCZ1 complex subunit 1, found in Homo sapiens (Human).